A 753-amino-acid polypeptide reads, in one-letter code: MAAAPPPPAKNQGKAKQHVTGARFRQRKISVKQPLTIYKQRDLPTLDSNELEPSQVHHLNSNASSSSTQQPRDLHAVETGVDKNEEEEVHLQQVINAAQKALLGSKKEEKSSDMYIPTPDASRIWPEAHKYYKDQKFKQPETYIKFSATVEDTVGVEYNMDEVDEKFYRETLCKYYPKKKNKSDENNRKCTELEFETICDKLEKTIEARQPFLSMDPSNILSYEELSSYIVDQFKSAVKTSNPYIVTNGGNLEYISTTALKERLSKEIKYEPFVTIFDKNQMSTSAVRPIPKLFELFGRPVYDHWKERKIERKGKTIQPTLKFEDPNSNEKENDNDPYICFRRREFRQARKTRRADTIGAERIRSMQKSLHRARDLIMSVSEREILKLDNFQAEHELFKARCATKACKRELNIKGDEYLFFPHKKKKIVRTEDEEREKKREKKKQDQELALKQQQALQQQQQQPPQPPQQAPSKQDGTSTSQPYVKLPPAKVPDMDLVTVSLVLKEKNETIKRAVLEKLRKRKEHDKGFINLTDDPYQPFFDISTNRAEELSHIPYSSIAATHYHQFNTSNYMNDQLKKLLEEKKPLPGVKTFLGSNGELVPSKAFPHLSSLLEEKYKATSGYIERLLQSVETQDFSSYTNGFKDVEPKETNEPVMAFPQRIRRRVGRAGRVFLDHQQEYPQPNFQQDTDRVGGIPDVYCKEDAIKRLQSKWKFDTEYKTTEPFSLDPSKLNGISPSTQSIRFGSMLLNRTRK.

Disordered stretches follow at residues 1–75 (MAAA…RDLH) and 429–490 (VRTE…LPPA). The segment covering 46–71 (LDSNELEPSQVHHLNSNASSSSTQQP) has biased composition (polar residues). Residues 429–449 (VRTEDEEREKKREKKKQDQEL) show a composition bias toward basic and acidic residues. The segment covering 450–463 (ALKQQQALQQQQQQ) has biased composition (low complexity).

This sequence belongs to the enhancer of polycomb family. Component of the NuA4 histone acetyltransferase complex.

It is found in the nucleus. Its function is as follows. Component of the NuA4 histone acetyltransferase complex which is involved in transcriptional activation of selected genes principally by acetylation of nucleosomal histone H4 and H2A. The NuA4 complex is also involved in DNA repair. Involved in gene silencing by neighboring heterochromatin, blockage of the silencing spreading along the chromosome, and required for cell cycle progression through G2/M. This Candida albicans (strain SC5314 / ATCC MYA-2876) (Yeast) protein is Enhancer of polycomb-like protein 1 (EPL1).